The following is an 89-amino-acid chain: Small ribosomal subunit protein uS15 (89 aa).

The protein belongs to the universal ribosomal protein uS15 family. As to quaternary structure, part of the 30S ribosomal subunit. Forms a bridge to the 50S subunit in the 70S ribosome, contacting the 23S rRNA.

Functionally, one of the primary rRNA binding proteins, it binds directly to 16S rRNA where it helps nucleate assembly of the platform of the 30S subunit by binding and bridging several RNA helices of the 16S rRNA. Forms an intersubunit bridge (bridge B4) with the 23S rRNA of the 50S subunit in the ribosome. The chain is Small ribosomal subunit protein uS15 from Salinispora tropica (strain ATCC BAA-916 / DSM 44818 / JCM 13857 / NBRC 105044 / CNB-440).